Here is a 282-residue protein sequence, read N- to C-terminus: sn-glycerol-3-phosphate transport system permease protein UgpE (282 aa).

6 consecutive transmembrane segments (helical) span residues 14-34 (LILILGIIIVAFPIYYTFVAS), 86-106 (MAIAVGKIIISFMSAFAIVFF), 112-132 (MFFFWMIFITLMLPVEVRILP), 146-168 (YAGLTLPLMASATATFLFRQFFL), 201-221 (IAALFVILSIYGWTQYLWPLL), and 248-268 (WNYVMVTAILAIIPPILVVVL). The 192-residue stretch at 78–269 (LWNSFVVAMA…IPPILVVVLM (192 aa)) folds into the ABC transmembrane type-1 domain.

The protein belongs to the binding-protein-dependent transport system permease family. The complex is composed of two ATP-binding proteins (UgpC), two transmembrane proteins (UgpA and UgpE) and a solute-binding protein (UgpB).

It is found in the cell inner membrane. Its function is as follows. Part of the ABC transporter complex UgpBAEC involved in sn-glycerol-3-phosphate (G3P) import. Probably responsible for the translocation of the substrate across the membrane. This chain is sn-glycerol-3-phosphate transport system permease protein UgpE (ugpE), found in Brucella suis biovar 1 (strain 1330).